Reading from the N-terminus, the 75-residue chain is Brevinin-2SN2 (75 aa).

The first 22 residues, 1 to 22 (MFTMKKSLLFLFFLGTISLSFC), serve as a signal peptide directing secretion. A propeptide spans 23 to 40 (EEERGADEDDGGEMTEEE) (removed in mature form). Residues C69 and C75 are joined by a disulfide bond.

Belongs to the frog skin active peptide (FSAP) family. Brevinin subfamily. In terms of tissue distribution, expressed by the skin glands.

Its subcellular location is the secreted. Antimicrobial peptide. Active against some Gram-negative and a variety of Gram-positive bacterial strains. Active against fungus C.glabrata 090902 but not against C.albicans ATCC 10231. Shows hemolytic activity against human erythrocytes. This Sylvirana spinulosa (Fine-spined frog) protein is Brevinin-2SN2.